The primary structure comprises 131 residues: Small ribosomal subunit protein uS11 (131 aa).

It belongs to the universal ribosomal protein uS11 family. In terms of assembly, part of the 30S ribosomal subunit. Interacts with proteins S7 and S18. Binds to IF-3.

Functionally, located on the platform of the 30S subunit, it bridges several disparate RNA helices of the 16S rRNA. Forms part of the Shine-Dalgarno cleft in the 70S ribosome. This chain is Small ribosomal subunit protein uS11, found in Dictyoglomus turgidum (strain DSM 6724 / Z-1310).